We begin with the raw amino-acid sequence, 135 residues long: Protein NrdI (135 aa).

Belongs to the NrdI family.

Functionally, probably involved in ribonucleotide reductase function. The sequence is that of Protein NrdI from Pectobacterium carotovorum subsp. carotovorum (strain PC1).